Reading from the N-terminus, the 540-residue chain is MSAKDVKFHDSARSRIVKGVNVLADAVKVTLGPKGRNVLIERSFGAPTITKDGVSVAKEIELKDRFENMGAQVVKQVASKTADVAGDGTTTATVLAQSIVQEGMKHVAAGMNPMDLKRGIDKAVAAVLDELHRLSKPIKTSREIAQVGAISANADEAIGKIIADAMDKVGKEGVITVEDGKSLENELEVVEGMQFDRGYLSPYFINDPDKQVAHLDDPLILLHDKKISSIRDLLPVLEAAAKAGKPLLIIAEDVEGEALTTLVVNSMRGVLKVAAVKAPGFGDRRKALLEDIAILTGATVISEETGKQLEKATLEELGRAKRVEVQKENTIIIDGAGDQTRIDARVKAIRAQIEEATSDYDREKLQERVAKLAGGVAVIKVGAATEVEMKEKKDRVDDALHATRAAVEEGIVPGGGVALLRARSAISSLTGANADQDAGIRIVLRALEAPLRVIAANAGDEPSVVVAKVLSGKGNYGYNAATGEYGDLVETGVVDPTKVTRTALQNAASIAGLILTTDATVAEAPKEEKAVPAPAPELEY.

Residues 30 to 33 (TLGP), K51, 87 to 91 (DGTTT), G415, 479 to 481 (NAA), and D495 contribute to the ATP site.

This sequence belongs to the chaperonin (HSP60) family. As to quaternary structure, forms a cylinder of 14 subunits composed of two heptameric rings stacked back-to-back. Interacts with the co-chaperonin GroES.

Its subcellular location is the cytoplasm. The enzyme catalyses ATP + H2O + a folded polypeptide = ADP + phosphate + an unfolded polypeptide.. Together with its co-chaperonin GroES, plays an essential role in assisting protein folding. The GroEL-GroES system forms a nano-cage that allows encapsulation of the non-native substrate proteins and provides a physical environment optimized to promote and accelerate protein folding. This Paraburkholderia xenovorans (strain LB400) protein is Chaperonin GroEL 2/3.